A 329-amino-acid polypeptide reads, in one-letter code: Cytosolic arginine sensor for mTORC1 subunit 2 (329 aa).

2 ACT domains span residues 72-140 (ADAT…HTLS) and 262-322 (ELWK…HALK).

Belongs to the GATS family. As to quaternary structure, forms homodimers and heterodimers with CASTOR1. Interacts with the GATOR2 complex which is composed of MIOS, SEC13, SEH1L, WDR24 and WDR59; the interaction is not regulated by arginine.

The protein resides in the cytoplasm. It is found in the cytosol. In terms of biological role, functions as a negative regulator of the TORC1 signaling pathway through the GATOR complex. As part of homodimers or heterodimers with CASTOR1, directly binds and inhibits the GATOR subcomplex GATOR2 and thereby mTORC1. Does not directly bind arginine, but binding of arginine to CASTOR1 disrupts the interaction of CASTOR2-containing heterodimers with GATOR2 which can in turn activate mTORC1 and the TORC1 signaling pathway. In Mus musculus (Mouse), this protein is Cytosolic arginine sensor for mTORC1 subunit 2.